A 625-amino-acid polypeptide reads, in one-letter code: MSKKTNAPVQEFEYKAEMKQLLDLIVHSLYTHPEIFLRELVSNAADALSKARFSSLTDGGLMAAAGEDAIHITLDKEKLLFVIEDSGIGMSEDELIANLGTVAKSGTLGFMQSLQEQKKELDGNLIGQFGVGFYSVFMVTENVTVETRSAQEGSEGLRWQSSGQGTYTIEKVEKKERGTRISFTLKEEYKEFAEEYRVEQVIKKYSNFVDFPIYLGEKQLNSVTALWQRPKSELQEGDVHEFYKFISNDFEDPLDYLSVSVEGAVSFKALLFLPQNAPMELLYRQGELENKGPQLYVKKVMIQNECRDLLPEYLRFIAGVVDTEDLSLNVSREVVQSSPVMAKIRQILTTKILGWFEELAVEQPEKFKTFYKAFGPIVKIGLNTDFTNRDKLIELLRFESTKTGEGEFVTLKEYVARMGGEQKEIYYHSGAGRAQLLANPNLEYFQSRGIEVLLLSDPVDVFVIPSIHEYDSKQLKSIEKADIDFSKEKTEGEEPVAENLLVPLLAKFREALGEDIADVVESHRLVSSPVTIVGGKDAMDSQMERMMKMMQQEMPAAKKVLEVNPRHPIIRNLSGMMIANADNPLINSAIRQLYEGALLLEGDLSSTTGFVQRMNELIEAATLSR.

The segment at 1 to 332 (MSKKTNAPVQ…TEDLSLNVSR (332 aa)) is a; substrate-binding. Residues 333 to 545 (EVVQSSPVMA…KDAMDSQMER (213 aa)) form a b region. Residues 546–625 (MMKMMQQEMP…ELIEAATLSR (80 aa)) are c.

It belongs to the heat shock protein 90 family. As to quaternary structure, homodimer.

The protein resides in the cytoplasm. Molecular chaperone. Has ATPase activity. This chain is Chaperone protein HtpG, found in Chlorobium phaeovibrioides (strain DSM 265 / 1930) (Prosthecochloris vibrioformis (strain DSM 265)).